Consider the following 360-residue polypeptide: Putative F-box protein At5g55150 (360 aa).

The F-box domain occupies 6-54 (SSWSEFLPELLNTVFHNLNDARDILNCATVCSSWKDSSSAVYYSRTFSP).

This Arabidopsis thaliana (Mouse-ear cress) protein is Putative F-box protein At5g55150.